We begin with the raw amino-acid sequence, 184 residues long: Der GTPase-activating protein YihI (184 aa).

2 disordered regions span residues Met1–Ser106 and Leu159–Leu184. Positions Val8–Arg32 are enriched in basic and acidic residues. Positions Leu159–Glu169 are enriched in acidic residues.

This sequence belongs to the YihI family. In terms of assembly, interacts with Der.

Its function is as follows. A GTPase-activating protein (GAP) that modifies Der/EngA GTPase function. May play a role in ribosome biogenesis. The protein is Der GTPase-activating protein YihI of Pectobacterium atrosepticum (strain SCRI 1043 / ATCC BAA-672) (Erwinia carotovora subsp. atroseptica).